The sequence spans 80 residues: Small ribosomal subunit protein uS17 (80 aa).

This sequence belongs to the universal ribosomal protein uS17 family. Part of the 30S ribosomal subunit.

Functionally, one of the primary rRNA binding proteins, it binds specifically to the 5'-end of 16S ribosomal RNA. This chain is Small ribosomal subunit protein uS17, found in Chelativorans sp. (strain BNC1).